The following is a 240-amino-acid chain: Bidirectional sugar transporter SWEET5 (240 aa).

Residues 1–9 (MTDPHTART) lie on the Extracellular side of the membrane. A helical membrane pass occupies residues 10–30 (IVGIVGNVISFGLFCAPIPTM). The 86-residue stretch at 10–95 (IVGIVGNVIS…YVTIFFVFAT (86 aa)) folds into the MtN3/slv 1 domain. Residues 31 to 45 (VKIWKMKSVSEFKPD) are Cytoplasmic-facing. The helical transmembrane segment at 46-66 (PYVATVLNCMMWTFYGLPFVQ) threads the bilayer. Topologically, residues 67–72 (PDSLLV) are extracellular. Residues 73–93 (ITINGTGLFMELVYVTIFFVF) form a helical membrane-spanning segment. Over 94-103 (ATSPVRRKIT) the chain is Cytoplasmic. A helical transmembrane segment spans residues 104–124 (IAMVIEVIFMAVVIFCTMYFL). Residues 125 to 131 (HTTKQRS) are Extracellular-facing. Residues 132 to 152 (MLIGILCIVFNVIMYAAPLTV) traverse the membrane as a helical segment. The region spanning 133-217 (LIGILCIVFN…IIYITYYKTT (85 aa)) is the MtN3/slv 2 domain. The Cytoplasmic portion of the chain corresponds to 153 to 165 (MKLVIKTKSVKYM). The chain crosses the membrane as a helical span at residues 166-186 (PFFLSLANFMNGVVWVIYACL). Over 187 to 190 (KFDP) the chain is Extracellular. Residues 191 to 211 (YILIPNGLGSLSGIIQLIIYI) form a helical membrane-spanning segment. Residues 212–240 (TYYKTTNWNDDDEDKEKRYSNAGIELGQA) are Cytoplasmic-facing.

This sequence belongs to the SWEET sugar transporter family. As to quaternary structure, forms homooligomers and heterooligomers with SWEET6, SWEET8, SWEET9, SWEET11 and SWEET12.

It localises to the cell membrane. Mediates both low-affinity uptake and efflux of sugar across the plasma membrane. May play roles in nurturing the male gametophyte. This chain is Bidirectional sugar transporter SWEET5, found in Arabidopsis thaliana (Mouse-ear cress).